Consider the following 215-residue polypeptide: UPF0502 protein YceH (215 aa).

Lys80 is subject to N6-acetyllysine.

Belongs to the UPF0502 family.

The sequence is that of UPF0502 protein YceH from Escherichia coli O127:H6 (strain E2348/69 / EPEC).